The following is a 264-amino-acid chain: [LysW]-aminoadipate/[LysW]-glutamate kinase (264 aa).

Substrate contacts are provided by residues 35 to 36 (GG), arginine 62, and asparagine 167.

The protein belongs to the acetylglutamate kinase family. LysZ subfamily.

The protein localises to the cytoplasm. The catalysed reaction is [amino-group carrier protein]-C-terminal-N-(1,4-dicarboxybutan-1-yl)-L-glutamine + ATP = [amino-group carrier protein]-C-terminal-N-(1-carboxy-5-phosphooxy-5-oxopentan-1-yl)-L-glutamine + ADP. It catalyses the reaction [amino-group carrier protein]-C-terminal-gamma-(L-glutamyl)-L-glutamate + ATP = [amino-group carrier protein]-C-terminal-gamma-(5-phospho-L-glutamyl)-L-glutamate + ADP. It participates in amino-acid biosynthesis; L-lysine biosynthesis via AAA pathway; L-lysine from L-alpha-aminoadipate (Thermus route): step 2/5. The protein operates within amino-acid biosynthesis; L-arginine biosynthesis. Its function is as follows. Involved in both the arginine and lysine biosynthetic pathways. Phosphorylates the LysW-bound precursors glutamate (for arginine biosynthesis), respectively alpha-aminoadipate (for lysine biosynthesis). In Saccharolobus solfataricus (strain ATCC 35092 / DSM 1617 / JCM 11322 / P2) (Sulfolobus solfataricus), this protein is [LysW]-aminoadipate/[LysW]-glutamate kinase.